A 201-amino-acid polypeptide reads, in one-letter code: Small ribosomal subunit protein uS4 (201 aa).

The S4 RNA-binding domain maps to 91-157 (SRLDNVIYRA…VPFQIARETV (67 aa)).

Belongs to the universal ribosomal protein uS4 family. In terms of assembly, part of the 30S ribosomal subunit. Contacts protein S5. The interaction surface between S4 and S5 is involved in control of translational fidelity.

One of the primary rRNA binding proteins, it binds directly to 16S rRNA where it nucleates assembly of the body of the 30S subunit. Its function is as follows. With S5 and S12 plays an important role in translational accuracy. The sequence is that of Small ribosomal subunit protein uS4 from Mycobacterium leprae (strain Br4923).